The primary structure comprises 168 residues: Crossover junction endodeoxyribonuclease RuvC (168 aa).

Active-site residues include Asp-9, Glu-69, and Asp-141. Positions 9, 69, and 141 each coordinate Mg(2+).

This sequence belongs to the RuvC family. In terms of assembly, homodimer which binds Holliday junction (HJ) DNA. The HJ becomes 2-fold symmetrical on binding to RuvC with unstacked arms; it has a different conformation from HJ DNA in complex with RuvA. In the full resolvosome a probable DNA-RuvA(4)-RuvB(12)-RuvC(2) complex forms which resolves the HJ. It depends on Mg(2+) as a cofactor.

Its subcellular location is the cytoplasm. The catalysed reaction is Endonucleolytic cleavage at a junction such as a reciprocal single-stranded crossover between two homologous DNA duplexes (Holliday junction).. In terms of biological role, the RuvA-RuvB-RuvC complex processes Holliday junction (HJ) DNA during genetic recombination and DNA repair. Endonuclease that resolves HJ intermediates. Cleaves cruciform DNA by making single-stranded nicks across the HJ at symmetrical positions within the homologous arms, yielding a 5'-phosphate and a 3'-hydroxyl group; requires a central core of homology in the junction. The consensus cleavage sequence is 5'-(A/T)TT(C/G)-3'. Cleavage occurs on the 3'-side of the TT dinucleotide at the point of strand exchange. HJ branch migration catalyzed by RuvA-RuvB allows RuvC to scan DNA until it finds its consensus sequence, where it cleaves and resolves the cruciform DNA. The protein is Crossover junction endodeoxyribonuclease RuvC of Bdellovibrio bacteriovorus (strain ATCC 15356 / DSM 50701 / NCIMB 9529 / HD100).